The primary structure comprises 339 residues: Phenylalanine--tRNA ligase alpha subunit (339 aa).

Glutamate 254 serves as a coordination point for Mg(2+).

The protein belongs to the class-II aminoacyl-tRNA synthetase family. Phe-tRNA synthetase alpha subunit type 1 subfamily. In terms of assembly, tetramer of two alpha and two beta subunits. Mg(2+) serves as cofactor.

The protein localises to the cytoplasm. It carries out the reaction tRNA(Phe) + L-phenylalanine + ATP = L-phenylalanyl-tRNA(Phe) + AMP + diphosphate + H(+). This Clostridium perfringens (strain SM101 / Type A) protein is Phenylalanine--tRNA ligase alpha subunit.